A 343-amino-acid chain; its full sequence is Uroporphyrinogen decarboxylase (343 aa).

Residues R21–R25, D71, Y148, S203, and H316 contribute to the substrate site.

This sequence belongs to the uroporphyrinogen decarboxylase family. Homodimer.

It localises to the cytoplasm. The catalysed reaction is uroporphyrinogen III + 4 H(+) = coproporphyrinogen III + 4 CO2. It participates in porphyrin-containing compound metabolism; protoporphyrin-IX biosynthesis; coproporphyrinogen-III from 5-aminolevulinate: step 4/4. Catalyzes the decarboxylation of four acetate groups of uroporphyrinogen-III to yield coproporphyrinogen-III. The polypeptide is Uroporphyrinogen decarboxylase (Campylobacter fetus subsp. fetus (strain 82-40)).